The chain runs to 359 residues: Non-functional pseudokinase ZRK2 (359 aa).

Over residues methionine 1 to glutamine 10 the composition is skewed to basic residues. Residues methionine 1–arginine 20 are disordered. The 293-residue stretch at leucine 64–phenylalanine 356 folds into the Protein kinase domain. Residues phenylalanine 70–alanine 78 and lysine 97 contribute to the ATP site.

The protein belongs to the protein kinase superfamily. Ser/Thr protein kinase family. ZRK subfamily.

The polypeptide is Non-functional pseudokinase ZRK2 (Arabidopsis thaliana (Mouse-ear cress)).